A 195-amino-acid chain; its full sequence is Imidazoleglycerol-phosphate dehydratase (195 aa).

It belongs to the imidazoleglycerol-phosphate dehydratase family.

The protein resides in the cytoplasm. The enzyme catalyses D-erythro-1-(imidazol-4-yl)glycerol 3-phosphate = 3-(imidazol-4-yl)-2-oxopropyl phosphate + H2O. It functions in the pathway amino-acid biosynthesis; L-histidine biosynthesis; L-histidine from 5-phospho-alpha-D-ribose 1-diphosphate: step 6/9. The protein is Imidazoleglycerol-phosphate dehydratase of Dinoroseobacter shibae (strain DSM 16493 / NCIMB 14021 / DFL 12).